A 404-amino-acid polypeptide reads, in one-letter code: Voltage-gated potassium channel subunit beta-3 (404 aa).

The segment covering 1 to 14 (MQVSIACTEQNLRS) has biased composition (polar residues). Residues 1-78 (MQVSIACTEQ…RESTGRGTGM (78 aa)) are disordered. The span at 28–50 (PGGGNGGPVGGGHGNPPGGGGLG) shows a compositional bias: gly residues. NADP(+)-binding residues include Thr-97, Trp-98, Gln-104, and Asp-126. The active-site Proton donor/acceptor is Tyr-131. Residues Asn-199, Ser-229, Arg-230, Gln-255, Trp-284, Ser-285, Pro-286, Leu-287, Ala-288, Cys-289, Lys-295, Lys-305, Gly-364, Ser-366, Gln-370, and Glu-373 each contribute to the NADP(+) site.

The protein belongs to the shaker potassium channel beta subunit family. As to quaternary structure, forms heteromultimeric complex with alpha subunits. Interacts with KCNA5 and KCNB2. In terms of tissue distribution, predominantly expressed in brain. Strongest expression in olfactory bulb and thalamic nuclei. Not detected in heart, spleen, lung, liver, skeletal muscle, kidney and testis.

Its subcellular location is the cytoplasm. Its function is as follows. Regulatory subunit of the voltage-gated potassium (Kv) channels composed of pore-forming and potassium-conducting alpha subunits and of regulatory beta subunits. The beta-3/KCNAB3 subunit may mediate closure of potassium channels. Inactivates Kv1.4/KCNA4 alpha subunit-containing Kv channel current but not Kv1.1/KCNA1 or Kv1.5/KCNA5 channels. May display nicotinamide adenine dinucleotide phosphate (NADPH)-dependent aldoketoreductase activity. The binding of oxidized and reduced NADP(H) cofactors may be required for the regulation of potassium channel activity. This is Voltage-gated potassium channel subunit beta-3 from Rattus norvegicus (Rat).